Consider the following 132-residue polypeptide: Small ribosomal subunit protein uS8 (132 aa).

This sequence belongs to the universal ribosomal protein uS8 family. In terms of assembly, part of the 30S ribosomal subunit. Contacts proteins S5 and S12.

Its function is as follows. One of the primary rRNA binding proteins, it binds directly to 16S rRNA central domain where it helps coordinate assembly of the platform of the 30S subunit. This Enterococcus faecalis (strain ATCC 700802 / V583) protein is Small ribosomal subunit protein uS8.